Here is a 391-residue protein sequence, read N- to C-terminus: Somatostatin receptor type 1 (391 aa).

The span at Met-1–Ser-11 shows a compositional bias: low complexity. A disordered region spans residues Met-1–Thr-49. Topologically, residues Met-1–Gly-55 are extracellular. N-linked (GlcNAc...) asparagine glycosylation occurs at Asn-4. The span at Cys-20 to Ala-33 shows a compositional bias: gly residues. N-linked (GlcNAc...) asparagine glycosylation is found at Asn-43 and Asn-47. The helical transmembrane segment at Ser-56–Leu-83 threads the bilayer. Topologically, residues Arg-84–Asn-93 are cytoplasmic. A helical membrane pass occupies residues Ile-94–Leu-119. At Arg-120–Arg-130 the chain is on the extracellular side. The cysteines at positions 129 and 207 are disulfide-linked. Residues Leu-131–Val-152 traverse the membrane as a helical segment. Topologically, residues Asp-153–Lys-174 are cytoplasmic. Residues Val-175–Ser-195 traverse the membrane as a helical segment. The Extracellular portion of the chain corresponds to Arg-196 to Trp-218. The chain crosses the membrane as a helical span at residues Leu-219–Val-243. Residues Leu-244 to Thr-269 are Cytoplasmic-facing. A helical transmembrane segment spans residues Leu-270–Phe-295. The Extracellular segment spans residues Ala-296–Thr-302. A helical transmembrane segment spans residues Val-303–Ser-326. The Cytoplasmic segment spans residues Asp-327 to Leu-391. The S-palmitoyl cysteine moiety is linked to residue Cys-338.

The protein belongs to the G-protein coupled receptor 1 family. As to quaternary structure, interacts with SKB1.

The protein localises to the cell membrane. Receptor for somatostatin with higher affinity for somatostatin-14 than -28. This receptor is coupled via pertussis toxin sensitive G proteins to inhibition of adenylyl cyclase. In addition it stimulates phosphotyrosine phosphatase and Na(+)/H(+) exchanger via pertussis toxin insensitive G proteins. This chain is Somatostatin receptor type 1 (SSTR1), found in Canis lupus familiaris (Dog).